The following is a 312-amino-acid chain: tRNA pseudouridine synthase B (312 aa).

The active-site Nucleophile is the Asp-37.

Belongs to the pseudouridine synthase TruB family. Type 1 subfamily.

The enzyme catalyses uridine(55) in tRNA = pseudouridine(55) in tRNA. Its function is as follows. Responsible for synthesis of pseudouridine from uracil-55 in the psi GC loop of transfer RNAs. The sequence is that of tRNA pseudouridine synthase B from Thermus thermophilus (strain ATCC BAA-163 / DSM 7039 / HB27).